A 433-amino-acid polypeptide reads, in one-letter code: LanC-like protein GCL1 (433 aa).

The segment at 1 to 22 (MSSSVDFVTEQGRCGDDGNGAG) is disordered.

The protein belongs to the LanC-like protein family.

In terms of biological role, may play a role in signaling. May be not involved in abscisic acid (ABA) signaling. The polypeptide is LanC-like protein GCL1 (GCL1) (Arabidopsis thaliana (Mouse-ear cress)).